We begin with the raw amino-acid sequence, 339 residues long: Phenylalanine--tRNA ligase alpha subunit (339 aa).

Residue Glu250 participates in Mg(2+) binding.

Belongs to the class-II aminoacyl-tRNA synthetase family. Phe-tRNA synthetase alpha subunit type 1 subfamily. In terms of assembly, tetramer of two alpha and two beta subunits. The cofactor is Mg(2+).

It is found in the cytoplasm. It carries out the reaction tRNA(Phe) + L-phenylalanine + ATP = L-phenylalanyl-tRNA(Phe) + AMP + diphosphate + H(+). The chain is Phenylalanine--tRNA ligase alpha subunit from Azobacteroides pseudotrichonymphae genomovar. CFP2.